Reading from the N-terminus, the 584-residue chain is A-type ATP synthase subunit A (584 aa).

233-240 (GPFGSGKT) provides a ligand contact to ATP.

It belongs to the ATPase alpha/beta chains family. In terms of assembly, has multiple subunits with at least A(3), B(3), C, D, E, F, H, I and proteolipid K(x).

It localises to the cell membrane. It catalyses the reaction ATP + H2O + 4 H(+)(in) = ADP + phosphate + 5 H(+)(out). Its function is as follows. Component of the A-type ATP synthase that produces ATP from ADP in the presence of a proton gradient across the membrane. The A chain is the catalytic subunit. This chain is A-type ATP synthase subunit A, found in Methanothermobacter thermautotrophicus (strain ATCC 29096 / DSM 1053 / JCM 10044 / NBRC 100330 / Delta H) (Methanobacterium thermoautotrophicum).